We begin with the raw amino-acid sequence, 418 residues long: uncharacterized protein (418 aa).

This is an uncharacterized protein from Invertebrate iridescent virus 6 (IIV-6).